Here is a 1985-residue protein sequence, read N- to C-terminus: Histone-lysine N-methyltransferase SETD1B (1985 aa).

The span at 1–11 shows a compositional bias: basic residues; the sequence is MENSHPHHHHQ. Residues 1 to 25 are disordered; sequence MENSHPHHHHQQPPPQPGPSGERRN. The tract at residues 67-97 is interaction with WDR82; the sequence is VEDPRVVGIWTKNKELELSVPKFKIDEFYVG. The 89-residue stretch at 92-180 folds into the RRM domain; that stretch reads DEFYVGPVPP…NIIHVELDTK (89 aa). Disordered regions lie at residues 234–304, 353–710, 955–1480, 1519–1624, and 1658–1687; these read GCGS…QDPT, GSSG…PPPA, VKRK…RTGP, QLPP…STKL, and RGPW…PQPL. Polar residues-rich tracts occupy residues 242-258, 264-273, 281-304, and 353-365; these read VTPN…TAYS, TPNSYGQGTP, PFSQ…QDPT, and GSSG…QSQD. Low complexity predominate over residues 366-381; that stretch reads ATTFAHTPPPAQTATA. Composition is skewed to pro residues over residues 393-404, 423-433, and 440-449; these read TPAPPFPPPPEE, PAPPPLPPAEP, and GTPPGPPPPD. A compositionally biased stretch (basic and acidic residues) spans 484-512; it reads EKPHDSLDSRIEMLLKEQRTKLPFLREQD. Low complexity predominate over residues 522–535; that stretch reads SPISSSSSQLSPLS. Residues 583 to 594 show a composition bias toward pro residues; sequence PRPPPEPGPPDP. Over residues 628–637 the composition is skewed to acidic residues; the sequence is EDMEISDDEM. Over residues 650–669 the composition is skewed to low complexity; the sequence is PMVVTPGAGAVAAPNVLAPN. A compositionally biased stretch (pro residues) spans 670 to 710; it reads LPLPPPPGFPPLPPPPPPPPPQPGFPMPPPLPPPPPPPPPA. 2 positions are modified to phosphoserine: Ser-977 and Ser-985. Residues 986–1006 are compositionally biased toward basic and acidic residues; the sequence is ERERDRDIADAPCELTKRDPK. Ser-1022 is subject to Phosphoserine. Positions 1032 to 1055 are enriched in low complexity; sequence LSASSSSSASSSSGSSTTSPSSSA. Residues 1058 to 1083 show a composition bias toward acidic residues; sequence KEEEDRESTEEEEEEEEEEAEEEEEE. Over residues 1087 to 1097 the composition is skewed to low complexity; sequence SRISSPSSSSS. Residues 1100 to 1120 show a composition bias toward acidic residues; that stretch reads KDDEDDNEADSDGQIDSDIDD. The segment covering 1143–1178 has biased composition (low complexity); sequence SITTSKAPAESSSSSSESSGSSEFESSSESESSSSS. Positions 1179 to 1202 are enriched in acidic residues; the sequence is SEDEEEMTVPGVEEEEEEEEEEEK. The segment covering 1205-1217 has biased composition (low complexity); it reads AMAAATVVAMAEE. Positions 1247–1261 are enriched in acidic residues; it reads GTEEEVDIEAEDEVP. 3 positions are modified to phosphoserine: Ser-1283, Ser-1301, and Ser-1354. Residues 1331–1373 show a composition bias toward pro residues; sequence EPPPMLSLPLQPPLPPPRLLRPPSPPPEPETPEPPKPPVPLEP. Positions 1402–1442 are enriched in low complexity; that stretch reads PGGEPPLSGSSSGLSLSSPQVPGSPFSYPSPSPGLSSGGLP. The span at 1535 to 1544 shows a compositional bias: basic residues; sequence IKRKPGRPRR. Composition is skewed to pro residues over residues 1600-1619 and 1678-1687; these read PAPP…PPPV and SPEPSPPQPL. A phosphoserine mark is found at Ser-1678 and Ser-1682. Positions 1764–1769 match the WDR5 interaction motif (WIN) motif; sequence GCARSE. Residues 1786-1819 form a disordered region; the sequence is SRASTDEPPMDTQGMSIPAQPHASTRAGSERRSE. Positions 1817–1822 match the RxxxRR motif motif; sequence RSEQRR. The region spanning 1846-1963 is the SET domain; the sequence is KKLKFCKSHI…VNEEITYDYK (118 aa). Tyr-1962 contributes to the S-adenosyl-L-methionine binding site. One can recognise a Post-SET domain in the interval 1969–1985; that stretch reads VKIPCLCGSENCRGTLN.

Belongs to the class V-like SAM-binding methyltransferase superfamily. In terms of assembly, component of the SET1B/COMPASS complex composed of the catalytic subunit SETD1B, WDR5, WDR82, RBBP5, ASH2L/ASH2, CXXC1/CFP1, HCFC1, DPY30 homotrimer and BOD1. Forms a core complex with the evolutionary conserved subcomplex WRAD composed of WDR5, RBBP5, ASH2L/ASH2 and DPY30 subunits; WRAD differentially stimulates the methyltransferase activity. Interacts with HCFC1 and ASH2L/ASH2. Interacts (via the RRM domain) with WDR82. Interacts (via the RRM domain) with hyperphosphorylated C-terminal domain (CTD) of RNA polymerase II large subunit (POLR2A) only in the presence of WDR82. Binds specifically to CTD heptad repeats phosphorylated on 'Ser-5' of each heptad. Interacts with RBM15. Interacts (via WIN motif) with WDR5. As to expression, widely expressed.

Its subcellular location is the nucleus. The protein resides in the nucleus speckle. The protein localises to the chromosome. It localises to the cytoplasm. The enzyme catalyses L-lysyl(4)-[histone H3] + S-adenosyl-L-methionine = N(6)-methyl-L-lysyl(4)-[histone H3] + S-adenosyl-L-homocysteine + H(+). It catalyses the reaction N(6)-methyl-L-lysyl(4)-[histone H3] + S-adenosyl-L-methionine = N(6),N(6)-dimethyl-L-lysyl(4)-[histone H3] + S-adenosyl-L-homocysteine + H(+). It carries out the reaction N(6),N(6)-dimethyl-L-lysyl(4)-[histone H3] + S-adenosyl-L-methionine = N(6),N(6),N(6)-trimethyl-L-lysyl(4)-[histone H3] + S-adenosyl-L-homocysteine + H(+). Its function is as follows. Histone methyltransferase that catalyzes methyl group transfer from S-adenosyl-L-methionine to the epsilon-amino group of 'Lys-4' of histone H3 (H3K4) via a non-processive mechanism. Part of chromatin remodeling machinery, forms H3K4me1, H3K4me2 and H3K4me3 methylation marks at active chromatin sites where transcription and DNA repair take place. Plays an essential role in regulating the transcriptional programming of multipotent hematopoietic progenitor cells and lymphoid lineage specification during hematopoiesis. The sequence is that of Histone-lysine N-methyltransferase SETD1B (Setd1b) from Mus musculus (Mouse).